The sequence spans 127 residues: Secreted RxLR effector protein 7 (127 aa).

Positions Met-1–Ala-21 are cleaved as a signal peptide. The RxLR-dEER signature appears at Arg-48–Arg-65.

This sequence belongs to the RxLR effector family.

Its subcellular location is the secreted. It localises to the host nucleus. The protein resides in the host cytoplasm. Its function is as follows. Secreted effector that completely suppresses the host cell death induced by cell death-inducing proteins. In Plasmopara viticola (Downy mildew of grapevine), this protein is Secreted RxLR effector protein 7.